Reading from the N-terminus, the 335-residue chain is MNLAKRILQGEQLTKETVLKIYEDTNIDTLDLLNEAYILRKHYFGKKVKLNMILNAKSGICPENCGYCGQSREIKQKQRYALIPEEQIIDGAKVAHDNHIGTYCIVMSGRGPSDKEVDHISNTVRTIKSQHPQLKICACLGLTNDEQAKKLKSAGVDRYNHNINTSENYHDNVVTTHSYKDRTDTIELMKANNISPCSGVICGMGESNQDIVDMAFALKEMDADSIPINFLHPIKGTKFGSMDDLTPMKCLRIVALFRLINPTKEIRIAGGREVNLRSLQPLALKAANSIFVGDYLITGGQPNQLDYDMINDLGFEIDYDTCENKENKNDVSRAN.

A Radical SAM core domain is found at Y43–A269. The [4Fe-4S] cluster site is built by C61, C65, and C68. Residues C104, C137, C197, and R267 each coordinate [2Fe-2S] cluster.

The protein belongs to the radical SAM superfamily. Biotin synthase family. Homodimer. Requires [4Fe-4S] cluster as cofactor. [2Fe-2S] cluster serves as cofactor.

It catalyses the reaction (4R,5S)-dethiobiotin + (sulfur carrier)-SH + 2 reduced [2Fe-2S]-[ferredoxin] + 2 S-adenosyl-L-methionine = (sulfur carrier)-H + biotin + 2 5'-deoxyadenosine + 2 L-methionine + 2 oxidized [2Fe-2S]-[ferredoxin]. It functions in the pathway cofactor biosynthesis; biotin biosynthesis; biotin from 7,8-diaminononanoate: step 2/2. Catalyzes the conversion of dethiobiotin (DTB) to biotin by the insertion of a sulfur atom into dethiobiotin via a radical-based mechanism. This is Biotin synthase from Staphylococcus aureus (strain MRSA252).